A 490-amino-acid polypeptide reads, in one-letter code: Betaine aldehyde dehydrogenase (490 aa).

Residue asparagine 93 coordinates K(+). 150-152 (GAW) lines the NAD(+) pocket. Lysine 162 functions as the Charge relay system in the catalytic mechanism. 176 to 179 (KPSE) lines the NAD(+) pocket. Residue valine 180 participates in K(+) binding. Residue 230–233 (GTAT) coordinates NAD(+). Leucine 246 serves as a coordination point for K(+). Glutamate 252 serves as the catalytic Proton acceptor. NAD(+)-binding residues include glycine 254, cysteine 286, and glutamate 387. The active-site Nucleophile is the cysteine 286. Cysteine 286 is modified (cysteine sulfenic acid (-SOH)). K(+)-binding residues include lysine 457 and glycine 460. The Charge relay system role is filled by glutamate 464.

This sequence belongs to the aldehyde dehydrogenase family. As to quaternary structure, dimer of dimers. Requires K(+) as cofactor.

The catalysed reaction is betaine aldehyde + NAD(+) + H2O = glycine betaine + NADH + 2 H(+). The protein operates within amine and polyamine biosynthesis; betaine biosynthesis via choline pathway; betaine from betaine aldehyde: step 1/1. In terms of biological role, involved in the biosynthesis of the osmoprotectant glycine betaine. Catalyzes the irreversible oxidation of betaine aldehyde to the corresponding acid. The chain is Betaine aldehyde dehydrogenase from Xanthomonas euvesicatoria pv. vesicatoria (strain 85-10) (Xanthomonas campestris pv. vesicatoria).